The following is a 717-amino-acid chain: Fatty acid oxidation complex subunit alpha (717 aa).

The segment at 1 to 189 (MIYQSPTIEV…KVGAIDAVVA (189 aa)) is enoyl-CoA hydratase/isomerase. A substrate-binding site is contributed by Asp-296. Residues 311–717 (KKVNSAAVLG…ANNGSYYQQA (407 aa)) form a 3-hydroxyacyl-CoA dehydrogenase region. Residues Met-324, Asp-343, 400–402 (VVE), Lys-407, and Ser-429 contribute to the NAD(+) site. The active-site For 3-hydroxyacyl-CoA dehydrogenase activity is the His-450. Asn-453 lines the NAD(+) pocket. Substrate-binding residues include Asn-500 and Tyr-660.

The protein in the N-terminal section; belongs to the enoyl-CoA hydratase/isomerase family. It in the C-terminal section; belongs to the 3-hydroxyacyl-CoA dehydrogenase family. Heterotetramer of two alpha chains (FadB) and two beta chains (FadA).

It carries out the reaction a (3S)-3-hydroxyacyl-CoA + NAD(+) = a 3-oxoacyl-CoA + NADH + H(+). The catalysed reaction is a (3S)-3-hydroxyacyl-CoA = a (2E)-enoyl-CoA + H2O. The enzyme catalyses a 4-saturated-(3S)-3-hydroxyacyl-CoA = a (3E)-enoyl-CoA + H2O. It catalyses the reaction (3S)-3-hydroxybutanoyl-CoA = (3R)-3-hydroxybutanoyl-CoA. It carries out the reaction a (3Z)-enoyl-CoA = a 4-saturated (2E)-enoyl-CoA. The catalysed reaction is a (3E)-enoyl-CoA = a 4-saturated (2E)-enoyl-CoA. Its pathway is lipid metabolism; fatty acid beta-oxidation. Its function is as follows. Involved in the aerobic and anaerobic degradation of long-chain fatty acids via beta-oxidation cycle. Catalyzes the formation of 3-oxoacyl-CoA from enoyl-CoA via L-3-hydroxyacyl-CoA. It can also use D-3-hydroxyacyl-CoA and cis-3-enoyl-CoA as substrate. This chain is Fatty acid oxidation complex subunit alpha, found in Shewanella halifaxensis (strain HAW-EB4).